A 411-amino-acid polypeptide reads, in one-letter code: Serine hydroxymethyltransferase (411 aa).

(6S)-5,6,7,8-tetrahydrofolate contacts are provided by residues leucine 119 and 123 to 125; that span reads GHL. Residue lysine 228 is modified to N6-(pyridoxal phosphate)lysine. 351-353 is a (6S)-5,6,7,8-tetrahydrofolate binding site; sequence SPF.

This sequence belongs to the SHMT family. In terms of assembly, homodimer. It depends on pyridoxal 5'-phosphate as a cofactor.

Its subcellular location is the cytoplasm. It carries out the reaction (6R)-5,10-methylene-5,6,7,8-tetrahydrofolate + glycine + H2O = (6S)-5,6,7,8-tetrahydrofolate + L-serine. Its pathway is one-carbon metabolism; tetrahydrofolate interconversion. It functions in the pathway amino-acid biosynthesis; glycine biosynthesis; glycine from L-serine: step 1/1. Catalyzes the reversible interconversion of serine and glycine with tetrahydrofolate (THF) serving as the one-carbon carrier. This reaction serves as the major source of one-carbon groups required for the biosynthesis of purines, thymidylate, methionine, and other important biomolecules. Also exhibits THF-independent aldolase activity toward beta-hydroxyamino acids, producing glycine and aldehydes, via a retro-aldol mechanism. The polypeptide is Serine hydroxymethyltransferase (Clostridium beijerinckii (strain ATCC 51743 / NCIMB 8052) (Clostridium acetobutylicum)).